We begin with the raw amino-acid sequence, 481 residues long: Aspartyl/glutamyl-tRNA(Asn/Gln) amidotransferase subunit B (481 aa).

It belongs to the GatB/GatE family. GatB subfamily. As to quaternary structure, heterotrimer of A, B and C subunits.

It carries out the reaction L-glutamyl-tRNA(Gln) + L-glutamine + ATP + H2O = L-glutaminyl-tRNA(Gln) + L-glutamate + ADP + phosphate + H(+). The catalysed reaction is L-aspartyl-tRNA(Asn) + L-glutamine + ATP + H2O = L-asparaginyl-tRNA(Asn) + L-glutamate + ADP + phosphate + 2 H(+). In terms of biological role, allows the formation of correctly charged Asn-tRNA(Asn) or Gln-tRNA(Gln) through the transamidation of misacylated Asp-tRNA(Asn) or Glu-tRNA(Gln) in organisms which lack either or both of asparaginyl-tRNA or glutaminyl-tRNA synthetases. The reaction takes place in the presence of glutamine and ATP through an activated phospho-Asp-tRNA(Asn) or phospho-Glu-tRNA(Gln). This Pseudomonas syringae pv. syringae (strain B728a) protein is Aspartyl/glutamyl-tRNA(Asn/Gln) amidotransferase subunit B.